We begin with the raw amino-acid sequence, 424 residues long: C4-dicarboxylate transport protein (424 aa).

8 helical membrane-spanning segments follow: residues 4 to 24 (SLFK…VLLG), 44 to 64 (LIKM…IAGM), 76 to 96 (VALI…LVVV), 142 to 162 (IGAF…LFGF), 184 to 206 (VFFG…AMAF), 222 to 242 (LIVC…GLIA), 326 to 346 (IWHQ…AAGV), and 352 to 372 (IVLA…LALI).

This sequence belongs to the dicarboxylate/amino acid:cation symporter (DAACS) (TC 2.A.23) family.

The protein resides in the cell inner membrane. Its function is as follows. Responsible for the transport of dicarboxylates such as succinate, fumarate, and malate from the periplasm across the membrane. In Erwinia tasmaniensis (strain DSM 17950 / CFBP 7177 / CIP 109463 / NCPPB 4357 / Et1/99), this protein is C4-dicarboxylate transport protein.